Reading from the N-terminus, the 483-residue chain is ATP synthase subunit beta (483 aa).

169-176 (GGAGVGKT) is a binding site for ATP.

Belongs to the ATPase alpha/beta chains family. In terms of assembly, F-type ATPases have 2 components, CF(1) - the catalytic core - and CF(0) - the membrane proton channel. CF(1) has five subunits: alpha(3), beta(3), gamma(1), delta(1), epsilon(1). CF(0) has three main subunits: a(1), b(2) and c(9-12). The alpha and beta chains form an alternating ring which encloses part of the gamma chain. CF(1) is attached to CF(0) by a central stalk formed by the gamma and epsilon chains, while a peripheral stalk is formed by the delta and b chains.

It is found in the cell membrane. The catalysed reaction is ATP + H2O + 4 H(+)(in) = ADP + phosphate + 5 H(+)(out). Produces ATP from ADP in the presence of a proton gradient across the membrane. The catalytic sites are hosted primarily by the beta subunits. This Rhodococcus jostii (strain RHA1) protein is ATP synthase subunit beta.